The following is a 243-amino-acid chain: Pyridoxine 5'-phosphate synthase (243 aa).

N9 contacts 3-amino-2-oxopropyl phosphate. 11 to 12 contributes to the 1-deoxy-D-xylulose 5-phosphate binding site; the sequence is DH. Position 20 (R20) interacts with 3-amino-2-oxopropyl phosphate. H45 serves as the catalytic Proton acceptor. Positions 47 and 52 each coordinate 1-deoxy-D-xylulose 5-phosphate. The active-site Proton acceptor is E72. 1-deoxy-D-xylulose 5-phosphate is bound at residue T102. H193 serves as the catalytic Proton donor. 3-amino-2-oxopropyl phosphate is bound by residues G194 and 215 to 216; that span reads GH.

The protein belongs to the PNP synthase family. In terms of assembly, homooctamer; tetramer of dimers.

It is found in the cytoplasm. It carries out the reaction 3-amino-2-oxopropyl phosphate + 1-deoxy-D-xylulose 5-phosphate = pyridoxine 5'-phosphate + phosphate + 2 H2O + H(+). It participates in cofactor biosynthesis; pyridoxine 5'-phosphate biosynthesis; pyridoxine 5'-phosphate from D-erythrose 4-phosphate: step 5/5. In terms of biological role, catalyzes the complicated ring closure reaction between the two acyclic compounds 1-deoxy-D-xylulose-5-phosphate (DXP) and 3-amino-2-oxopropyl phosphate (1-amino-acetone-3-phosphate or AAP) to form pyridoxine 5'-phosphate (PNP) and inorganic phosphate. The sequence is that of Pyridoxine 5'-phosphate synthase from Salmonella typhi.